Reading from the N-terminus, the 299-residue chain is SET domain-containing protein 9 (299 aa).

An SET domain is found at 122 to 295; it reads FSVAQATSSL…QGEELFSNYY (174 aa). Y294 contributes to the S-adenosyl-L-methionine binding site.

It belongs to the class V-like SAM-binding methyltransferase superfamily.

In Homo sapiens (Human), this protein is SET domain-containing protein 9 (SETD9).